Consider the following 883-residue polypeptide: DNA mismatch repair protein MutS (883 aa).

619–626 (GPNMGGKS) provides a ligand contact to ATP.

It belongs to the DNA mismatch repair MutS family.

In terms of biological role, this protein is involved in the repair of mismatches in DNA. It is possible that it carries out the mismatch recognition step. This protein has a weak ATPase activity. This chain is DNA mismatch repair protein MutS, found in Marinomonas sp. (strain MWYL1).